Consider the following 335-residue polypeptide: MMADSTRNAFGAYSITEIITTRNQNNFNANTKNQNQNTSNTQSSGGITRKPVMNDGLYALFDQLLKGVTFEESIYRGYDYSHLPNLETVFNTASDYVNGQYKIGFSEAQLDGYTLNKTFSVIMPEFSFSLEFIKNEEQSDRNPDENEQLKPKTRRIVVELVSLFNRDEIEYTPEQVRGEIALIALFKLYITGFLYHLNVNKSVYDQQLNLEKYRPLLVAIVGFESIDVKLKKLTPLYYTLATFSNYPLNILRYSLKTIVEVTNEMDQIIKRDGLFKQIDIKPMLGNTMSVGYSLRGIDNSSLFLAPKHYRQVRSRDDSNVREIISYDLSKIDFGF.

The span at 27–42 (FNANTKNQNQNTSNTQ) shows a compositional bias: low complexity. The tract at residues 27 to 48 (FNANTKNQNQNTSNTQSSGGIT) is disordered.

The sequence is that of Non-structural protein P9-1 (S9) from Fiji disease virus (isolate Sugarcane) (FDV).